We begin with the raw amino-acid sequence, 311 residues long: Cytochrome c biogenesis protein CcsA (311 aa).

8 helical membrane-spanning segments follow: residues 11-31, 44-64, 68-88, 101-121, 146-166, 217-237, 251-268, and 280-300; these read VLLL…LAFW, VVQL…LWRW, GHFP…GCTF, LVPA…SFAL, VIMM…AVLF, TITV…VWAN, TWAL…HTRL, and VAVS…LLGI.

Belongs to the CcmF/CycK/Ccl1/NrfE/CcsA family. As to quaternary structure, may interact with ccs1.

It is found in the cellular thylakoid membrane. Functionally, required during biogenesis of c-type cytochromes (cytochrome c6 and cytochrome f) at the step of heme attachment. This Synechococcus sp. (strain RCC307) protein is Cytochrome c biogenesis protein CcsA.